Consider the following 293-residue polypeptide: MATISAKLVKELREKTGAGMMDCKKALTETDGDIDKAIDYLREKGIAKAAKKADRIAAEGLVHVETKGNDAVIVEINSETDFVARNEGFQELVKEIANQVLDTKAETVEALMETTLPNGKSVDERIKEAISTIGEKLSVRRFAIRTKTDNDAFGAYLHMGGRIGVLTVVEGSTDEEAARDVAMHIAAINPKYVSSEQVSEEEINHEREVLKQQALNEGKPENIVEKMVEGRLRKYLQEICAVDQDFVKNPDVTVEAFLKTKGGKLVDFVRYEVGEGMEKREENFADEVKGQMK.

An involved in Mg(2+) ion dislocation from EF-Tu region spans residues 80–83 (TDFV).

The protein belongs to the EF-Ts family.

It is found in the cytoplasm. Its function is as follows. Associates with the EF-Tu.GDP complex and induces the exchange of GDP to GTP. It remains bound to the aminoacyl-tRNA.EF-Tu.GTP complex up to the GTP hydrolysis stage on the ribosome. The chain is Elongation factor Ts from Staphylococcus aureus (strain USA300).